We begin with the raw amino-acid sequence, 123 residues long: Ig heavy chain V region HPCG13 (123 aa).

One can recognise an Ig-like domain in the interval 1–114; sequence EVKLVESGGG…GSYWYFDVWG (114 aa).

The chain is Ig heavy chain V region HPCG13 from Mus musculus (Mouse).